The primary structure comprises 530 residues: G2/mitotic-specific cyclin-B (530 aa).

Residues 76–152 (ARVDSHWKKQ…EPTLKREDSN (77 aa)) form a disordered region. Low complexity predominate over residues 121-144 (PTKTTVEPTKVTVKSSSSENVNEP). S137 carries the phosphoserine modification.

The protein belongs to the cyclin family. Cyclin AB subfamily. In terms of assembly, interacts with the protein kinase Cdk1 to form a serine/threonine kinase holoenzyme complex also known as maturation promoting factor (MPF). The cyclin subunit imparts substrate specificity to the complex.

In terms of biological role, essential for the control of the cell cycle at the G2/M (mitosis) transition. The chain is G2/mitotic-specific cyclin-B (CycB) from Drosophila melanogaster (Fruit fly).